The primary structure comprises 385 residues: Glucose-fructose oxidoreductase domain-containing protein 2 (385 aa).

An N-terminal signal peptide occupies residues 1-25 (MKLLPGVGVFGTGSSARVLVPLLRA).

Belongs to the Gfo/Idh/MocA family.

Its subcellular location is the secreted. It localises to the extracellular space. The protein localises to the extracellular matrix. In terms of biological role, promotes matrix assembly. In Mus musculus (Mouse), this protein is Glucose-fructose oxidoreductase domain-containing protein 2 (Gfod2).